A 427-amino-acid chain; its full sequence is Flotillin-1 (427 aa).

Phosphoserine occurs at positions 19, 163, and 385.

This sequence belongs to the band 7/mec-2 family. Flotillin subfamily. Heterooligomeric complex of flotillin-1 and flotillin-2 and caveolin-1 and caveolin-2. Interacts with ECPAS.

The protein resides in the cell membrane. Its subcellular location is the endosome. It is found in the membrane. It localises to the caveola. The protein localises to the melanosome. The protein resides in the membrane raft. Its function is as follows. May act as a scaffolding protein within caveolar membranes, functionally participating in formation of caveolae or caveolae-like vesicles. The sequence is that of Flotillin-1 (FLOT1) from Bos taurus (Bovine).